We begin with the raw amino-acid sequence, 158 residues long: Oocyte-secreted protein 2 (158 aa).

The first 17 residues, 1-17 (MALEVLMLLAVLIWTGA), serve as a signal peptide directing secretion.

Belongs to the PLAC1 family. Highly expressed in oocytes.

It is found in the secreted. It localises to the cytoplasm. Involved in oocyte maturation. In Homo sapiens (Human), this protein is Oocyte-secreted protein 2 (OOSP2).